Here is a 217-residue protein sequence, read N- to C-terminus: Ribonuclease HII (217 aa).

The RNase H type-2 domain occupies D12 to A201. A divalent metal cation is bound by residues D18, E19, and D110.

This sequence belongs to the RNase HII family. Mn(2+) is required as a cofactor. Requires Mg(2+) as cofactor.

It localises to the cytoplasm. The catalysed reaction is Endonucleolytic cleavage to 5'-phosphomonoester.. Its function is as follows. Endonuclease that specifically degrades the RNA of RNA-DNA hybrids. The chain is Ribonuclease HII from Pseudomonas syringae pv. tomato (strain ATCC BAA-871 / DC3000).